We begin with the raw amino-acid sequence, 337 residues long: MVREEVVGSTRALQWKCVESRADSKRLYYGRFILSPLLKGQADTIGIAMRRALLGEIEGTCITRAKSEKVPHEYSTIAGIEESVHEILMNLKEIVLRSNLYGTRDASICVRGPRCVTAQDIISPPSVEVVDTTQHIASLTEPIDLCIGLQIQRDRGYRMKTTKNSQDGSYPIDAVSMPVRNANHSIHSYGNGNQKQEILFLEIWTNGSLTPKEALHEASRNLIDLFIPFLHAEEEDINFEENQNRFTVPPFTFPDRLANLKKNKKEIALKCIFIDQSELPPRTYNCLKRSNIHTLLDLLSNSQEDLMKIEYFRIEDVKQILDTLQKHFAIDLPKNKF.

The tract at residues 1–233 is alpha N-terminal domain (alpha-NTD); that stretch reads MVREEVVGST…DLFIPFLHAE (233 aa). The tract at residues 265 to 337 is alpha C-terminal domain (alpha-CTD); sequence KEIALKCIFI…FAIDLPKNKF (73 aa).

Belongs to the RNA polymerase alpha chain family. As to quaternary structure, in plastids the minimal PEP RNA polymerase catalytic core is composed of four subunits: alpha, beta, beta', and beta''. When a (nuclear-encoded) sigma factor is associated with the core the holoenzyme is formed, which can initiate transcription.

It localises to the plastid. The protein localises to the chloroplast. The enzyme catalyses RNA(n) + a ribonucleoside 5'-triphosphate = RNA(n+1) + diphosphate. In terms of biological role, DNA-dependent RNA polymerase catalyzes the transcription of DNA into RNA using the four ribonucleoside triphosphates as substrates. This Acorus calamus (Sweet flag) protein is DNA-directed RNA polymerase subunit alpha.